The sequence spans 204 residues: Large ribosomal subunit protein uL4 (204 aa).

The tract at residues 44 to 76 (KRQGTQSAKTRSEVRGGGIKPWRQKGTGRARQG) is disordered.

It belongs to the universal ribosomal protein uL4 family. Part of the 50S ribosomal subunit.

Its function is as follows. One of the primary rRNA binding proteins, this protein initially binds near the 5'-end of the 23S rRNA. It is important during the early stages of 50S assembly. It makes multiple contacts with different domains of the 23S rRNA in the assembled 50S subunit and ribosome. In terms of biological role, forms part of the polypeptide exit tunnel. The polypeptide is Large ribosomal subunit protein uL4 (Clostridium perfringens (strain ATCC 13124 / DSM 756 / JCM 1290 / NCIMB 6125 / NCTC 8237 / Type A)).